Reading from the N-terminus, the 949-residue chain is MKTDLLACRHIGVNKADAEVMLRKIGVASLDELIDKTIPANIRLKAPLALPAPMTEYEFARHIAELAGKNKLFTTYIGMGWYNTITPAVIQRNVFENPVWYTSYTPYQTEVSQGRLEALMNFQTAVCDLTAMPLANCSLLDEATAAAEAVTMMYGLRSRNQQKAGANVVFIDENIFPQTLAVITTRAIPQGIEIRTGKFRDLEFTDDLFACVLQYPNANGNAEDYREFTEKAHTANCKVAVAADILSLALLTPPGEWGADIVFGTTQRLGTPMFYGGPSAGYFATRDEYKRNMPGRIIGWSKDKYGKLCYRMALQTREQHIKREKATSNICTAQALLATMAGFYTVYHGQEGIRNIASRIHSITVFLEKSIGKLGFKQVNKQYFDTLRFILPDSVSAQQIRTIALSKEVNLRYFDNGDVGLSIDETTDVAAANILLSIFAIAAGKDFQKVDDIPEATIISEELKRQTPYLTHEVFSKYHTETEMMRYIKRLDRKDISLAQSMISLGSCTMKLNAAAEMLPLSCAEFMCMHPLVPEDQAAGYRELIHNLSEELKVITGFAGVSLQPNSGAAGEYAGLRTIRAYLESIGQGHRNKVLIPASAHGTNPASAIQAGFTTVTCACDEHGNVDMDDLRAKAEENKDDLAALMITYPSTHGIFETEIVEICQIIHACGAQVYMDGANMNAQVGLTNPGFIGADVCHLNLHKTFASPHGGGGPGVGPICVAEHLVPFLPGHGLFGNSQNEVSAAPFGSAGILPITYGYIRMMGAEGLTMATKTAILNANYLAACLKDTYGIVYRGANGFVGHEMILECRKVYEETGISENDIAKRLMDYGYHAPTLSFPVHGTLMIEPTESESLSELDNFVLTMLTIWNEIQEVKNGEADKEDNVLINAPHPEYEVVSDQWEHCYTREKAAYPIESVRENKFWVNVARVDNTLGDRKLLPTCYGCFD.

Lys-704 carries the N6-(pyridoxal phosphate)lysine modification.

This sequence belongs to the GcvP family. The glycine cleavage system is composed of four proteins: P, T, L and H. It depends on pyridoxal 5'-phosphate as a cofactor.

It catalyses the reaction N(6)-[(R)-lipoyl]-L-lysyl-[glycine-cleavage complex H protein] + glycine + H(+) = N(6)-[(R)-S(8)-aminomethyldihydrolipoyl]-L-lysyl-[glycine-cleavage complex H protein] + CO2. The glycine cleavage system catalyzes the degradation of glycine. The P protein binds the alpha-amino group of glycine through its pyridoxal phosphate cofactor; CO(2) is released and the remaining methylamine moiety is then transferred to the lipoamide cofactor of the H protein. This Bacteroides fragilis (strain ATCC 25285 / DSM 2151 / CCUG 4856 / JCM 11019 / LMG 10263 / NCTC 9343 / Onslow / VPI 2553 / EN-2) protein is Glycine dehydrogenase (decarboxylating).